Consider the following 188-residue polypeptide: Peptidyl-tRNA hydrolase (188 aa).

Y15 serves as a coordination point for tRNA. H20 (proton acceptor) is an active-site residue. TRNA-binding residues include F63, N65, and N111.

This sequence belongs to the PTH family. As to quaternary structure, monomer.

The protein localises to the cytoplasm. It carries out the reaction an N-acyl-L-alpha-aminoacyl-tRNA + H2O = an N-acyl-L-amino acid + a tRNA + H(+). In terms of biological role, hydrolyzes ribosome-free peptidyl-tRNAs (with 1 or more amino acids incorporated), which drop off the ribosome during protein synthesis, or as a result of ribosome stalling. Functionally, catalyzes the release of premature peptidyl moieties from peptidyl-tRNA molecules trapped in stalled 50S ribosomal subunits, and thus maintains levels of free tRNAs and 50S ribosomes. The sequence is that of Peptidyl-tRNA hydrolase from Hydrogenobaculum sp. (strain Y04AAS1).